The following is a 589-amino-acid chain: tRNA (guanine(26)-N(2))-dimethyltransferase 2 (589 aa).

Residues 9–465 enclose the Trm1 methyltransferase domain; it reads TVIKEGEAEI…APMEVIWDIM (457 aa). Arg-36 contributes to the S-adenosyl-L-methionine binding site. Residues 51-122 form a disordered region; that stretch reads KQEHEAKSSK…RFAPREPKPP (72 aa). Composition is skewed to basic and acidic residues over residues 68-81 and 106-122; these read VIEKDASEASKEET and DPAKTTERFAPREPKPP. S-adenosyl-L-methionine is bound by residues Arg-134, Asp-152, and Val-185. The Zn(2+) site is built by Cys-315, Cys-318, Cys-350, and Cys-353. The interval 550–589 is disordered; it reads LSQHHEELKEEDEEAEPEDNVQDKVDPKRQKTATDNITST. Acidic residues predominate over residues 558–569; it reads KEEDEEAEPEDN.

This sequence belongs to the class I-like SAM-binding methyltransferase superfamily. Trm1 family.

It catalyses the reaction guanosine(26) in tRNA + 2 S-adenosyl-L-methionine = N(2)-dimethylguanosine(26) in tRNA + 2 S-adenosyl-L-homocysteine + 2 H(+). Functionally, dimethylates a single guanine residue at position 26 of most tRNAs using S-adenosyl-L-methionine as donor of the methyl groups. The chain is tRNA (guanine(26)-N(2))-dimethyltransferase 2 from Arabidopsis thaliana (Mouse-ear cress).